A 228-amino-acid polypeptide reads, in one-letter code: MEDSRVYLDRSNATPSYIPVTPQIPVPGLGHRRVKREHVQVDEEPTVQILIKRPKVEDEEVPIPIFPPLPPARDPVAAVAAAGGQIVRRRRRRVPGTAMGVDTVDVVLPVGVRYHPSIEAARPPAVPPPRAVPPVGVRYHPSIEVARPPAARISPPRRRRRRRRSPRPRATAAYRSSAEVVERRRRVAQTVPVVRYHPSIQVEPAVHPPLAPRLPVQMAYTRYHPTIH.

The segment at 146–177 (ARPPAARISPPRRRRRRRRSPRPRATAAYRSS) is disordered. Basic residues predominate over residues 155–167 (PPRRRRRRRRSPR). Positions 168 to 177 (PRATAAYRSS) are enriched in low complexity.

The protein belongs to the adenoviridae core-capsid bridging protein family. As to quaternary structure, monomer. Homodimer. Exists in equilibrium between monomers and dimers in solution. Interacts with the histone-like nucleoprotein; this interactions bridge the virus core to the capsid. Interacts with core protein X; this interactions bridge the virus core to the capsid. Interacts with the endosome lysis protein VI; this interactions bridge the virus core to the capsid. Interacts with the peripentonal hexons. Interacts with host NPM1; this interaction might play a role in virus assembly.

It localises to the virion. It is found in the host nucleus. The protein localises to the host nucleolus. Associates loosely with the viral DNA to form an outer shell around the nucleoprotein-DNA complex and links it with the capsid by binding the endosome lysis protein. Dissociates from the viral genome during entry. Might be involved in nuclear capsid assembly of the viral particles through its association with NPM1/nucleophosmin. The chain is Core-capsid bridging protein from Murine adenovirus A serotype 1 (MAdV-1).